Reading from the N-terminus, the 588-residue chain is 2-succinyl-5-enolpyruvyl-6-hydroxy-3-cyclohexene-1-carboxylate synthase (588 aa).

It belongs to the TPP enzyme family. MenD subfamily. In terms of assembly, homodimer. Mg(2+) serves as cofactor. The cofactor is Mn(2+). It depends on thiamine diphosphate as a cofactor.

It carries out the reaction isochorismate + 2-oxoglutarate + H(+) = 5-enolpyruvoyl-6-hydroxy-2-succinyl-cyclohex-3-ene-1-carboxylate + CO2. The protein operates within quinol/quinone metabolism; 1,4-dihydroxy-2-naphthoate biosynthesis; 1,4-dihydroxy-2-naphthoate from chorismate: step 2/7. Its pathway is cofactor biosynthesis; phylloquinone biosynthesis. Its function is as follows. Catalyzes the thiamine diphosphate-dependent decarboxylation of 2-oxoglutarate and the subsequent addition of the resulting succinic semialdehyde-thiamine pyrophosphate anion to isochorismate to yield 2-succinyl-5-enolpyruvyl-6-hydroxy-3-cyclohexene-1-carboxylate (SEPHCHC). The protein is 2-succinyl-5-enolpyruvyl-6-hydroxy-3-cyclohexene-1-carboxylate synthase of Prochlorococcus marinus (strain MIT 9515).